We begin with the raw amino-acid sequence, 349 residues long: Uroporphyrinogen decarboxylase (349 aa).

Substrate is bound by residues R23–R27, D71, Y148, S203, and H317.

The protein belongs to the uroporphyrinogen decarboxylase family. As to quaternary structure, homodimer.

The protein resides in the cytoplasm. The enzyme catalyses uroporphyrinogen III + 4 H(+) = coproporphyrinogen III + 4 CO2. The protein operates within porphyrin-containing compound metabolism; protoporphyrin-IX biosynthesis; coproporphyrinogen-III from 5-aminolevulinate: step 4/4. Catalyzes the decarboxylation of four acetate groups of uroporphyrinogen-III to yield coproporphyrinogen-III. This is Uroporphyrinogen decarboxylase from Sorangium cellulosum (strain So ce56) (Polyangium cellulosum (strain So ce56)).